We begin with the raw amino-acid sequence, 263 residues long: Putative replication protein PDa0002 (263 aa).

The sequence is that of Putative replication protein PDa0002 from Xylella fastidiosa (strain Temecula1 / ATCC 700964).